The primary structure comprises 103 residues: Large ribosomal subunit protein uL24 (103 aa).

This sequence belongs to the universal ribosomal protein uL24 family. Part of the 50S ribosomal subunit.

In terms of biological role, one of two assembly initiator proteins, it binds directly to the 5'-end of the 23S rRNA, where it nucleates assembly of the 50S subunit. One of the proteins that surrounds the polypeptide exit tunnel on the outside of the subunit. In Halalkalibacterium halodurans (strain ATCC BAA-125 / DSM 18197 / FERM 7344 / JCM 9153 / C-125) (Bacillus halodurans), this protein is Large ribosomal subunit protein uL24.